Reading from the N-terminus, the 319-residue chain is Ubiquinone biosynthesis protein COQ4, mitochondrial (319 aa).

A mitochondrion-targeting transit peptide spans 1–28; it reads MISRSIFSKSVSLQRSQNRSFLLTAASA. Positions 205, 206, 209, and 221 each coordinate Zn(2+).

Belongs to the COQ4 family. Component of a multi-subunit COQ enzyme complex, composed of at least COQ3, COQ4, COQ5, COQ6, COQ7 and COQ9. Requires Zn(2+) as cofactor.

It localises to the mitochondrion inner membrane. The catalysed reaction is a 4-hydroxy-3-methoxy-5-(all-trans-polyprenyl)benzoate + H(+) = a 2-methoxy-6-(all-trans-polyprenyl)phenol + CO2. It functions in the pathway cofactor biosynthesis; ubiquinone biosynthesis. Functionally, lyase that catalyzes the C1-decarboxylation of 4-hydroxy-3-methoxy-5-(all-trans-polyprenyl)benzoic acid into 2-methoxy-6-(all-trans-polyprenyl)phenol during ubiquinone biosynthesis. The polypeptide is Ubiquinone biosynthesis protein COQ4, mitochondrial (Clavispora lusitaniae (strain ATCC 42720) (Yeast)).